Reading from the N-terminus, the 347-residue chain is GMP reductase (347 aa).

108–131 is an NADP(+) binding site; it reads ADFDKMKQILALSPSLKFICIDVA. Positions 181 and 183 each coordinate K(+). Cysteine 186 acts as the Thioimidate intermediate in catalysis. 216-239 is a binding site for NADP(+); that stretch reads IVSDGGCSVPGDVAKAFGGGADFV.

Belongs to the IMPDH/GMPR family. GuaC type 1 subfamily. Homotetramer.

It catalyses the reaction IMP + NH4(+) + NADP(+) = GMP + NADPH + 2 H(+). Functionally, catalyzes the irreversible NADPH-dependent deamination of GMP to IMP. It functions in the conversion of nucleobase, nucleoside and nucleotide derivatives of G to A nucleotides, and in maintaining the intracellular balance of A and G nucleotides. This is GMP reductase from Yersinia pestis bv. Antiqua (strain Antiqua).